A 403-amino-acid chain; its full sequence is Phosphopentomutase (403 aa).

Residues Asp13, Asp298, His303, Asp339, His340, and His351 each contribute to the Mn(2+) site.

It belongs to the phosphopentomutase family. Mn(2+) serves as cofactor.

The protein resides in the cytoplasm. It carries out the reaction 2-deoxy-alpha-D-ribose 1-phosphate = 2-deoxy-D-ribose 5-phosphate. It catalyses the reaction alpha-D-ribose 1-phosphate = D-ribose 5-phosphate. The protein operates within carbohydrate degradation; 2-deoxy-D-ribose 1-phosphate degradation; D-glyceraldehyde 3-phosphate and acetaldehyde from 2-deoxy-alpha-D-ribose 1-phosphate: step 1/2. Isomerase that catalyzes the conversion of deoxy-ribose 1-phosphate (dRib-1-P) and ribose 1-phosphate (Rib-1-P) to deoxy-ribose 5-phosphate (dRib-5-P) and ribose 5-phosphate (Rib-5-P), respectively. The polypeptide is Phosphopentomutase (Streptococcus pyogenes serotype M12 (strain MGAS2096)).